A 114-amino-acid polypeptide reads, in one-letter code: Hydrogenase maturation factor HypA (114 aa).

H2 is a binding site for Ni(2+). Residues C73, C76, C89, and C92 each coordinate Zn(2+).

This sequence belongs to the HypA/HybF family.

In terms of biological role, involved in the maturation of [NiFe] hydrogenases. Required for nickel insertion into the metal center of the hydrogenase. The protein is Hydrogenase maturation factor HypA of Desulfitobacterium hafniense (strain DSM 10664 / DCB-2).